The sequence spans 405 residues: SPbeta prophage-derived uncharacterized protein YonJ (405 aa).

Residues Asp-72 to Glu-101 are a coiled coil.

This chain is SPbeta prophage-derived uncharacterized protein YonJ (yonJ), found in Bacillus subtilis (strain 168).